The primary structure comprises 238 residues: uncharacterized protein (238 aa).

This is an uncharacterized protein from Rickettsia prowazekii (strain Madrid E).